A 189-amino-acid polypeptide reads, in one-letter code: Cyclin-dependent kinase inhibitor 5 (189 aa).

Positions 73 to 93 (KQQKQQLIPSVNQCQTKNPRA) are enriched in polar residues. The segment at 73–107 (KQQKQQLIPSVNQCQTKNPRASSGPAKKLEPDTTT) is disordered.

This sequence belongs to the CDI family. ICK/KRP subfamily. In terms of assembly, interacts with CYCD4-1. Does not interact with CDKA-1. Expressed in flowers and at lower levels in roots and leaves.

The protein resides in the nucleus. The protein localises to the nucleoplasm. Functionally, inhibits CYCD2-1/CDKA-1 complex kinase activity without interaction with the complex. This Arabidopsis thaliana (Mouse-ear cress) protein is Cyclin-dependent kinase inhibitor 5 (KRP5).